Here is an 80-residue protein sequence, read N- to C-terminus: MLIAWPDRVHCCEIMLQEGARVVDAVEMAALNGIEQAVGYAVFGVLVTSDHVLNEGDRVELLRPLLIDPKEARRRRAVSA.

The protein belongs to the UPF0125 (RnfH) family.

The polypeptide is UPF0125 protein XF_2346 (Xylella fastidiosa (strain 9a5c)).